A 419-amino-acid polypeptide reads, in one-letter code: MQTFLKGKRVGYWLSEKKIKKLNFQAFAELCRKRGIEVVQLNLSRPIEEQGPLDVIIHKLTDVILEADQNDSQALELVHRFQEYIDAHPETIVLDPLPAIRTLLDRSKSYELIRKIEAYMKDDRICSPPFMELTSLCGDDTMRLLEENGLAFPFICKTRVAHGTNSHEMAIVFNQEGLSAIQPPCVVQNFINHNAVLYKVFVVGESYTVVQRPSLKNFSAGTSDRESIFFNSHNVSKPESSSVLTALDKIEGVFERPSDEVIRELSRALRQALGVSLFGIDIIINNQTGQHAVIDINAFPGYEGVSEFFTDLLNHIASVLQGQSSGVAGAGDVAPLKHSRLLAEQAGGLAAERTCSASPGCCSSMMGQEPPWTPEADMGGVGAGSTAKLPHQRLGCTAGVSPSFQQHCVASLATKASSQ.

Lysine 18 serves as a coordination point for 1D-myo-inositol 1,3,4-trisphosphate. ATP-binding residues include arginine 106 and lysine 157. One can recognise an ATP-grasp domain in the interval 117–325 (EAYMKDDRIC…IASVLQGQSS (209 aa)). Residues histidine 167 and lysine 199 each contribute to the 1D-myo-inositol 1,3,4-trisphosphate site. Residues 188 to 199 (QNFINHNAVLYK), serine 214, serine 232, and serine 236 each bind ATP. Mg(2+)-binding residues include aspartate 281, aspartate 295, and asparagine 297. Position 297 (asparagine 297) interacts with 1D-myo-inositol 1,3,4-trisphosphate. Lysine 388 bears the N6-acetyllysine; by EP300 and CREBBP mark. Position 401 is a phosphoserine (serine 401). Lysine 415 is modified (N6-acetyllysine; by EP300 and CREBBP).

The protein belongs to the ITPK1 family. As to quaternary structure, monomer. Interacts with GPS1/COPS1. Requires Mg(2+) as cofactor. Acetylation by EP300 and CREBBP destabilizes ITPK1, and down-regulates enzymatic activity. Deacetylated by SIRT1.

The catalysed reaction is 1D-myo-inositol 3,4,5,6-tetrakisphosphate + ATP = 1D-myo-inositol 1,3,4,5,6-pentakisphosphate + ADP + H(+). The enzyme catalyses 1D-myo-inositol 1,3,4-trisphosphate + ATP = 1D-myo-inositol 1,3,4,5-tetrakisphosphate + ADP + H(+). It catalyses the reaction 1D-myo-inositol 1,3,4-trisphosphate + ATP = 1D-myo-inositol 1,3,4,6-tetrakisphosphate + ADP + H(+). It carries out the reaction 1D-myo-inositol 3,4,6-trisphosphate + ATP = 1D-myo-inositol 1,3,4,6-tetrakisphosphate + ADP + H(+). The catalysed reaction is 1D-myo-inositol 1,3,4-trisphosphate + 1D-myo-inositol 1,3,4,5,6-pentakisphosphate = 1D-myo-inositol 3,4,5,6-tetrakisphosphate + 1D-myo-inositol 1,3,4,6-tetrakisphosphate. The enzyme catalyses 1D-myo-inositol 1,3,4-trisphosphate + 1D-myo-inositol 1,3,4,5,6-pentakisphosphate = 1D-myo-inositol 3,4,5,6-tetrakisphosphate + 1D-myo-inositol 1,3,4,5-tetrakisphosphate. In terms of biological role, kinase that can phosphorylate various inositol polyphosphate such as Ins(3,4,5,6)P4 or Ins(1,3,4)P3. Phosphorylates Ins(3,4,5,6)P4 at position 1 to form Ins(1,3,4,5,6)P5. This reaction is thought to have regulatory importance, since Ins(3,4,5,6)P4 is an inhibitor of plasma membrane Ca(2+)-activated Cl(-) channels, while Ins(1,3,4,5,6)P5 is not. Also phosphorylates Ins(1,3,4)P3 on O-5 and O-6 to form Ins(1,3,4,6)P4, an essential molecule in the hexakisphosphate (InsP6) pathway. Also acts as an inositol polyphosphate phosphatase that dephosphorylates Ins(1,3,4,5)P4 and Ins(1,3,4,6)P4 to Ins(1,3,4)P3, and Ins(1,3,4,5,6)P5 to Ins(3,4,5,6)P4. May also act as an isomerase that interconverts the inositol tetrakisphosphate isomers Ins(1,3,4,5)P4 and Ins(1,3,4,6)P4 in the presence of ADP and magnesium. Probably acts as the rate-limiting enzyme of the InsP6 pathway. Modifies TNF-alpha-induced apoptosis by interfering with the activation of TNFRSF1A-associated death domain. Plays an important role in MLKL-mediated necroptosis. Produces highly phosphorylated inositol phosphates such as inositolhexakisphosphate (InsP6) which bind to MLKL mediating the release of an N-terminal auto-inhibitory region leading to its activation. Essential for activated phospho-MLKL to oligomerize and localize to the cell membrane during necroptosis. This Bos taurus (Bovine) protein is Inositol-tetrakisphosphate 1-kinase (ITPK1).